The following is a 198-amino-acid chain: Transcription factor IND (198 aa).

The segment at 1 to 33 is disordered; it reads MENGMYKKKGVCDSCVSSKSRSNHSPKRSMMEP. One can recognise a bHLH domain in the interval 118–167; the sequence is ISDDPQTVVARRRRERISEKIRILKRIVPGGAKMDTASMLDEAIRYTKFL.

In terms of assembly, homodimer. Heterodimer; possibly with ALC. As to expression, after fertilization, it is expressed in stripes about four cells wide at the margins of developing wild-type fruit. Also expressed in the inner valve layer, which becomes lignified later in fruit development. Detected in roots.

The protein resides in the nucleus. In terms of biological role, transcription regulator required for seed dispersal. Involved in the differentiation of all three cell types required for fruit dehiscence. Acts as the key regulator in a network including SHP and ALC that controls specification of the valve margin. Works with ALC, SHP, and FUL to allow differentiation of the lignified valve layer, the spring-loaded mechanism of fruit that promotes opening. Regulates the expression of the YJ80 marker. In Arabidopsis thaliana (Mouse-ear cress), this protein is Transcription factor IND (IND).